A 349-amino-acid polypeptide reads, in one-letter code: Myocyte-specific enhancer factor 2B (349 aa).

Residues 3-57 (RKKIQISRILDQRNRQVTFTKRKFGLMKKAYELSVLCDCDIALIIFNSAQRLFQY) form the MADS-box domain. The segment at residues 58–86 (ASSDMDRVLLKYTEYSEPHESRTNADILQ) is a DNA-binding region (mef2-type). Disordered regions lie at residues 237–317 (GSFA…DFPR) and 330–349 (AEPLRPSASLHRLTPDSWPR).

The protein belongs to the MEF2 family. Heterodimer. Interacts with HDAC9. Interacts with HDAC7. In terms of tissue distribution, highest expression found in embryonic heart and skeletal muscle. Low levels found in adult spleen, lung and testis while no expression is found in adult heart, brain or skeletal muscle.

Its subcellular location is the nucleus. Functionally, transcriptional activator which binds specifically to the MEF2 element, 5'-YTA[AT](4)TAR-3', found in numerous muscle-specific genes. Activates transcription via this element. May be involved in muscle-specific and/or growth factor-related transcription. The chain is Myocyte-specific enhancer factor 2B (Mef2b) from Mus musculus (Mouse).